The chain runs to 333 residues: MFRAAAPGQLRRATSLLRFQSTLVIAEHANDTLAPITLNTITAAKHLGGEVSCLVAGTKCDKVAQDLCKVAGVAKVLVAQHDAYKGLLPEELTPLILATQKQFNHTHICAGASAFGKNLLPRIAAKLDVAPISDIIAIKSPDTFVRTIYAGNAICTVKCDEKVKVFSVRGTSFEAAAASGGSASSEKASSTSPVGISEWLDQKLTKSDRPELTGAKVVVSGGRGLKSGENFKLLYDLADQLHAAVGASRAAVDAGFVTNDLQVGQTGKIVAPELYIAVGISGAIQHLAGMKDSKTIVAINKDPEAPIFQVADYGIVADLFKVVPEMTELLKKK.

The N-terminal 19 residues, 1–19, are a transit peptide targeting the mitochondrion; the sequence is MFRAAAPGQLRRATSLLRF. Residues 20–204 are domain I; that stretch reads QSTLVIAEHA…GISEWLDQKL (185 aa). Position 59 is an N6-acetyllysine; alternate (Lys59). Lys59 carries the N6-succinyllysine; alternate modification. N6-acetyllysine is present on Lys62. N6-acetyllysine; alternate is present on Lys69. An N6-succinyllysine; alternate modification is found at Lys69. Lys75 is subject to N6-acetyllysine. The residue at position 85 (Lys85) is an N6-acetyllysine; alternate. Lys85 carries the post-translational modification N6-succinyllysine; alternate. Position 93 is a phosphothreonine (Thr93). N6-acetyllysine occurs at positions 101 and 139. A Phosphoserine modification is found at Ser140. An N6-acetyllysine; alternate modification is found at Lys158. N6-succinyllysine; alternate is present on Lys158. N6-acetyllysine is present on Lys164. At Lys187 the chain carries N6-succinyllysine. Lys203 bears the N6-acetyllysine; alternate mark. Position 203 is an N6-succinyllysine; alternate (Lys203). Residues 205–333 are domain II; sequence TKSDRPELTG…PEMTELLKKK (129 aa). N6-succinyllysine is present on Lys216. Arg223 contacts FAD. N6-acetyllysine; alternate is present on residues Lys226 and Lys232. An N6-succinyllysine; alternate mark is found at Lys226 and Lys232. FAD-binding positions include Ser248, 263–266, 281–286, and Asn300; these read VGQT and SGAIQH. Residue Lys301 is modified to N6-succinyllysine. 318–319 provides a ligand contact to FAD; that stretch reads DL.

It belongs to the ETF alpha-subunit/FixB family. Heterodimer composed of ETFA and ETFB. Identified in a complex that contains ETFA, ETFB and ETFRF1. Interaction with ETFRF1 promotes dissociation of the bound FAD and loss of electron transfer activity. Interacts with TASOR. Requires FAD as cofactor.

Its subcellular location is the mitochondrion matrix. Heterodimeric electron transfer flavoprotein that accepts electrons from several mitochondrial dehydrogenases, including acyl-CoA dehydrogenases, glutaryl-CoA and sarcosine dehydrogenase. It transfers the electrons to the main mitochondrial respiratory chain via ETF-ubiquinone oxidoreductase (ETF dehydrogenase). Required for normal mitochondrial fatty acid oxidation and normal amino acid metabolism. The sequence is that of Electron transfer flavoprotein subunit alpha, mitochondrial (ETFA) from Bos taurus (Bovine).